Consider the following 449-residue polypeptide: Type 3 secretion system ATPase (449 aa).

ATP is bound at residue 178-183 (GCGKTT).

The protein belongs to the ATPase alpha/beta chains family. T3SS ATPase subfamily. The core secretion machinery of the T3SS is composed of approximately 20 different proteins, including cytoplasmic components, a base, an export apparatus and a needle. This subunit is part of the cytosolic complex. Forms homododecamers. Comprises two hexameric rings that are probably stacked face-to-face by the association of their C-terminal domains. Also present as monomer and homohexamer in solution.

Its subcellular location is the cytoplasm. It catalyses the reaction ATP + H2O + cellular proteinSide 1 = ADP + phosphate + cellular proteinSide 2.. Its activity is regulated as follows. Oligomerization increases ATPase activity. In terms of biological role, ATPase component of the type III secretion system (T3SS), also called injectisome, which is used to inject bacterial effector proteins into eukaryotic host cells. Acts as a molecular motor to provide the energy that is required for the export of proteins. Required for type III secretion apparatus (T3SA) formation, proper protein secretion, host cell invasion and virulence. May play a critical role in T3SS substrate recognition, disassembly of the effector/chaperone complex and unfolding of the effector in an ATP-dependent manner prior to secretion. This chain is Type 3 secretion system ATPase, found in Pseudomonas savastanoi pv. phaseolicola (Pseudomonas syringae pv. phaseolicola).